The sequence spans 138 residues: uncharacterized protein (138 aa).

The signal sequence occupies residues 1–35; sequence MVAPAARVFLRAVRAALTSTVPDLLCLLARGSPRG.

Isoform 1 is highly expressed in small intestine, testis and kidney, medium expressed in brain and heart and low expressed in colon; it could not be detected in liver, adrenal gland and pancreas.

It localises to the secreted. This is an uncharacterized protein from Homo sapiens (Human).